The primary structure comprises 214 residues: Redox-sensing transcriptional repressor Rex (214 aa).

Positions 16 to 55 (IYFRYLNVLKDANKQRVSSTELSEAVQVDSATIRRDFSYF) form a DNA-binding region, H-T-H motif. 90-95 (GVGSLG) contributes to the NAD(+) binding site.

This sequence belongs to the transcriptional regulatory Rex family. Homodimer.

It is found in the cytoplasm. Its function is as follows. Modulates transcription in response to changes in cellular NADH/NAD(+) redox state. This is Redox-sensing transcriptional repressor Rex from Limosilactobacillus reuteri (strain DSM 20016) (Lactobacillus reuteri).